Reading from the N-terminus, the 335-residue chain is Probable phosphoglycerate mutase ARB_03491 (335 aa).

The signal sequence occupies residues 1-24 (MAGRILLGLTLLATSLPLLAMGDA). Residue H108 is the Tele-phosphohistidine intermediate of the active site. The active-site Proton donor/acceptor is E211.

Belongs to the phosphoglycerate mutase family.

It localises to the secreted. Functionally, probable phosphomutase that may have a function related to the manipulation of phosphate groups on carbohydrates. The sequence is that of Probable phosphoglycerate mutase ARB_03491 from Arthroderma benhamiae (strain ATCC MYA-4681 / CBS 112371) (Trichophyton mentagrophytes).